The primary structure comprises 527 residues: MSRLLPSTTNQHPTSPSFDSVVILDYGSQYAQLIARRVRDAHVYCELVPYDTDWSALKHLSPKGIILSGGPASVYEPDAPQLPSWVLESGLPVLGICYGMQLLAHTLGGRVAPAQRREYGPAVVERVADHPIFAGLPARFDVWMSHGDRIDALPPGFEVLARSANAPYAAMARDHLIGLQFHPEVAHTPLGSVILRNFLFDVCGCAPTWTAESFVEQAIREIRERVGKDRVLLALSGGVDSSVAAALIHRAIGDQLTPVFVDTGLLREGEAETIREVFGRHFRMPLVAIDARQRFLVRLRGVSDPEQKRRLIGEEFVRVFEEIARSQGPFRFLAQGTLYPDVIESAAPGASRTAAKIKTHHNVGGLPQDLEFELLEPLRYLFKDEVRAIGRLLGLPEEIVQRQPFPGPGLAVRILGEVTEEALAIVRRADTIVREEVEAAGLSDGLWQFFAVLLPVHSTGVMGDQRTYARVIAIRAVTSTDAMTADWARLPHDLLARLANRIVNEVPGVNRVVYDITSKPPATIEWE.

One can recognise a Glutamine amidotransferase type-1 domain in the interval 20-208; that stretch reads SVVILDYGSQ…LFDVCGCAPT (189 aa). The active-site Nucleophile is the C97. Residues H182 and E184 contribute to the active site. The GMPS ATP-PPase domain maps to 209-402; sequence WTAESFVEQA…LGLPEEIVQR (194 aa). 236–242 is an ATP binding site; the sequence is SGGVDSS.

Homodimer.

The catalysed reaction is XMP + L-glutamine + ATP + H2O = GMP + L-glutamate + AMP + diphosphate + 2 H(+). The protein operates within purine metabolism; GMP biosynthesis; GMP from XMP (L-Gln route): step 1/1. Its function is as follows. Catalyzes the synthesis of GMP from XMP. This is GMP synthase [glutamine-hydrolyzing] from Thermomicrobium roseum (strain ATCC 27502 / DSM 5159 / P-2).